We begin with the raw amino-acid sequence, 321 residues long: L-Ala-D/L-Glu epimerase (321 aa).

Thr-124 and Lys-149 together coordinate substrate. The active-site Proton acceptor; specific for (R)-substrate epimerization is the Lys-151. Residues Asp-176, Glu-202, and Asp-225 each coordinate Mg(2+). Lys-247 serves as the catalytic Proton acceptor; specific for (S)-substrate epimerization. Cys-275, Asp-297, and Asp-299 together coordinate substrate.

Belongs to the mandelate racemase/muconate lactonizing enzyme family. As to quaternary structure, monomer. It depends on Mg(2+) as a cofactor.

The catalysed reaction is L-alanyl-L-glutamate = L-alanyl-D-glutamate. Its pathway is cell wall biogenesis; peptidoglycan recycling. In terms of biological role, catalyzes the epimerization of L-Ala-D-Glu to L-Ala-L-Glu and has a role in the recycling of the murein peptide, of which L-Ala-D-Glu is a component. Is also able to catalyze the reverse reaction and the epimerization of all the L-Ala-X dipeptides, except L-Ala-L-Arg, L-Ala-L-Lys and L-Ala-L-Pro. Is also active with L-Gly-L-Glu, L-Phe-L-Glu, and L-Ser-L-Glu, but not with L-Glu-L-Glu, L-Lys-L-Glu, L-Pro-L-Glu, L-Lys-L-Ala, or D-Ala-D-Ala. This Escherichia coli (strain K12) protein is L-Ala-D/L-Glu epimerase (ycjG).